A 357-amino-acid chain; its full sequence is Deoxyuridylate hydroxymethyltransferase (357 aa).

This sequence belongs to the thymidylate synthase family.

The catalysed reaction is dUMP + (6R)-5,10-methylene-5,6,7,8-tetrahydrofolate + H2O = 5-hydroxymethyl-dUMP + (6S)-5,6,7,8-tetrahydrofolate. Catalyzes formation of 5-hydroxymethyldeoxyuridylate (5HMdUMP) as a step in the pathway that replaces dTMP by thymidine hypermodifications in the viral genome. As a final result of the pathway of hypermodification, 5-Nalpha-putrescinylthymidine (Nalpha-PutT) substitutes for about 50% of thymidines in the viral DNA. These modifications probably prevent degradation of viral genome by the host restriction-modification antiviral defense system. The polypeptide is Deoxyuridylate hydroxymethyltransferase (Delftia acidovorans (Pseudomonas acidovorans)).